The following is a 376-amino-acid chain: MSDLPPDLVEDILSRVPATSLKRLRFTCKQWNSLFKNRRFTEKHFCKAPKQSHVLLWKDYTVCPMSINLNFSGSSIEFKSVLSLKDSHYNSEQVYIAKVFHCDGLLLCTTKDHRLLVWNPCLGETRWINFENDYKPYSRFSLGYKNNKSCRSYKILRFWTSYLTPNHIGLRYNIYEFTTDSWRVLIDKVSLNYFLIESENGVSFKGNTYWLALDEETNFLLGFDFTMERFKRLCLPSNKNCDTMVLSVVREEKLSVSHQNFCSSKMDIWMTNRIDSETAMSWKRYFSVEFKILSMCHSLPFCNSFLIDEEKKIVISTVRGNENMVNIIGAYNAYYAEVPVESTNWPCSPYFVSYVPSLVQIQQCKSKENNKTSLEM.

An F-box domain is found at 1–44; the sequence is MSDLPPDLVEDILSRVPATSLKRLRFTCKQWNSLFKNRRFTEKH.

In Arabidopsis thaliana (Mouse-ear cress), this protein is Putative F-box only protein 9 (FBX9).